Reading from the N-terminus, the 549-residue chain is Glucose-6-phosphate isomerase (549 aa).

The active-site Proton donor is the E355. Catalysis depends on residues H386 and K514.

This sequence belongs to the GPI family.

The protein localises to the cytoplasm. It catalyses the reaction alpha-D-glucose 6-phosphate = beta-D-fructose 6-phosphate. The protein operates within carbohydrate biosynthesis; gluconeogenesis. It participates in carbohydrate degradation; glycolysis; D-glyceraldehyde 3-phosphate and glycerone phosphate from D-glucose: step 2/4. In terms of biological role, catalyzes the reversible isomerization of glucose-6-phosphate to fructose-6-phosphate. The chain is Glucose-6-phosphate isomerase from Salmonella gallinarum (strain 287/91 / NCTC 13346).